Consider the following 64-residue polypeptide: Large ribosomal subunit protein bL35 (64 aa).

It belongs to the bacterial ribosomal protein bL35 family.

The sequence is that of Large ribosomal subunit protein bL35 from Ectopseudomonas mendocina (strain ymp) (Pseudomonas mendocina).